Here is a 447-residue protein sequence, read N- to C-terminus: Trigger factor (447 aa).

The 86-residue stretch at 164–249 (GDLVVIDFIG…VKEVKQAVVP (86 aa)) folds into the PPIase FKBP-type domain.

It belongs to the FKBP-type PPIase family. Tig subfamily.

Its subcellular location is the cytoplasm. It catalyses the reaction [protein]-peptidylproline (omega=180) = [protein]-peptidylproline (omega=0). Its function is as follows. Involved in protein export. Acts as a chaperone by maintaining the newly synthesized protein in an open conformation. Functions as a peptidyl-prolyl cis-trans isomerase. The chain is Trigger factor from Rhodospirillum rubrum (strain ATCC 11170 / ATH 1.1.1 / DSM 467 / LMG 4362 / NCIMB 8255 / S1).